A 1007-amino-acid chain; its full sequence is Protocadherin alpha-C2 (1007 aa).

A signal peptide spans 1 to 42 (MEQAGTRPAATEHPRLRRPMPWLLLLPLLLLLLLLLPGPAAS). 5 Cadherin domains span residues 43–148 (QLRY…SPRF), 149–257 (PRPN…SPAF), 258–365 (DQST…APEV), 374–469 (VPEN…PPSF), and 470–579 (LEDS…APHI). At 43-708 (QLRYSVPEEQ…RTYSEITLYL (666 aa)) the chain is on the extracellular side. N-linked (GlcNAc...) asparagine glycosylation is found at Asn-280 and Asn-436. Asn-586 and Asn-657 each carry an N-linked (GlcNAc...) asparagine glycan. The 98-residue stretch at 594–691 (VPRTAPAGYL…DRVSKILPDT (98 aa)) folds into the Cadherin 6 domain. The chain crosses the membrane as a helical span at residues 709–729 (IIALSTVSFIFLLTIIILSII). The Cytoplasmic portion of the chain corresponds to 730–1007 (KCYRYTAYGT…GNSTTDNSDQ (278 aa)). 4 PXXP repeats span residues 856-859 (PRQP), 889-892 (PGGP), 930-933 (PGNP), and 948-951 (PGSP). The segment at 856–951 (PRQPNPDWRY…PDKFIIPGSP (96 aa)) is 4 X 4 AA repeats of P-X-X-P. Residues 885–1007 (LRAGPGGPDQ…GNSTTDNSDQ (123 aa)) are disordered. The span at 966–980 (DKSDFITFGKKEETK) shows a compositional bias: basic and acidic residues.

It is found in the cell membrane. Its function is as follows. Potential calcium-dependent cell-adhesion protein. May be involved in the establishment and maintenance of specific neuronal connections in the brain. This chain is Protocadherin alpha-C2 (PCDHAC2), found in Homo sapiens (Human).